A 95-amino-acid polypeptide reads, in one-letter code: DNA-binding protein CENSYa_1764 (95 aa).

The tract at residues 1 to 21 is disordered; sequence MSYTDPDDSLPEHVPGEAEMS.

The protein belongs to the PDCD5 family.

The protein is DNA-binding protein CENSYa_1764 of Cenarchaeum symbiosum (strain A).